Consider the following 346-residue polypeptide: Tripartite motif-containing protein 44 (346 aa).

Residues 68–167 (TPPASGGDDA…ETEAESEFDP (100 aa)) form a disordered region. Residues 89 to 167 (EGEVESEVGE…ETEAESEFDP (79 aa)) are compositionally biased toward acidic residues. The B box-type zinc-finger motif lies at 176–217 (VAKRKCPDHGLDLSTYCQEDRQLICVLCPVIGAHRGHQLSTL). Residues Cys-181, His-184, Cys-203, and His-209 each contribute to the Zn(2+) site. The stretch at 292–327 (AHVTEILADIQSHMDRLMTQMAQAKEQLDTSNESAE) forms a coiled coil. The interval 313-346 (AQAKEQLDTSNESAEPKAEGDEEGPSGASEEEDT) is disordered. Positions 332–346 (GDEEGPSGASEEEDT) are enriched in acidic residues. A phosphoserine mark is found at Ser-338 and Ser-341.

In terms of assembly, interacts (via coiled coil) with TRIM17 (via coiled coil). As to expression, expressed mainly in brain with high level in cerebral hemispheres and cerebellum. Lower expression in kidney, lung and spleen. In brain is detected in the hippocampus, thalamic and pretectal nuclei, substantia nigra, the dorsal part of the medulla, the cerebellum, in the olfactory nucleus, other cortical areas apart from hippocampus and the striatum. Indeed expression is confined in neuronal somata namely in the CA3 region and dentate gyrus of the hippocampus, caudate-putamen, parabranchial nucleus, olfactory nucleus, cortex, deep cerebellar nuclei and thalamus. Also highly expressed in the spleen. thymus and testis.

Its function is as follows. May play a role in the process of differentiation and maturation of neuronal cells. May regulate the activity of TRIM17. Is a negative regulator of PAX6 expression. The protein is Tripartite motif-containing protein 44 (Trim44) of Mus musculus (Mouse).